We begin with the raw amino-acid sequence, 554 residues long: uncharacterized protein (554 aa).

This is an uncharacterized protein from Acidianus sp. F28 (AFV-2).